Reading from the N-terminus, the 509-residue chain is Putative thymidine phosphorylase (509 aa).

It belongs to the thymidine/pyrimidine-nucleoside phosphorylase family. Type 2 subfamily.

It carries out the reaction thymidine + phosphate = 2-deoxy-alpha-D-ribose 1-phosphate + thymine. This Bradyrhizobium sp. (strain ORS 278) protein is Putative thymidine phosphorylase.